The primary structure comprises 1270 residues: DNA-directed RNA polymerase subunit beta (1270 aa).

It belongs to the RNA polymerase beta chain family. In terms of assembly, the RNAP catalytic core consists of 2 alpha, 1 beta, 1 beta' and 1 omega subunit. When a sigma factor is associated with the core the holoenzyme is formed, which can initiate transcription.

The enzyme catalyses RNA(n) + a ribonucleoside 5'-triphosphate = RNA(n+1) + diphosphate. DNA-dependent RNA polymerase catalyzes the transcription of DNA into RNA using the four ribonucleoside triphosphates as substrates. The chain is DNA-directed RNA polymerase subunit beta from Flavobacterium psychrophilum (strain ATCC 49511 / DSM 21280 / CIP 103535 / JIP02/86).